A 144-amino-acid polypeptide reads, in one-letter code: Nucleoside diphosphate kinase (144 aa).

The ATP site is built by Lys-11, Phe-59, Arg-87, Thr-93, Arg-104, and Asn-114. His-117 serves as the catalytic Pros-phosphohistidine intermediate.

It belongs to the NDK family. In terms of assembly, homotetramer. Requires Mg(2+) as cofactor.

The protein resides in the cytoplasm. It catalyses the reaction a 2'-deoxyribonucleoside 5'-diphosphate + ATP = a 2'-deoxyribonucleoside 5'-triphosphate + ADP. The catalysed reaction is a ribonucleoside 5'-diphosphate + ATP = a ribonucleoside 5'-triphosphate + ADP. Major role in the synthesis of nucleoside triphosphates other than ATP. The ATP gamma phosphate is transferred to the NDP beta phosphate via a ping-pong mechanism, using a phosphorylated active-site intermediate. In Aliivibrio fischeri (strain ATCC 700601 / ES114) (Vibrio fischeri), this protein is Nucleoside diphosphate kinase.